A 125-amino-acid polypeptide reads, in one-letter code: UPF0102 protein mlr4633 (125 aa).

The protein belongs to the UPF0102 family.

This chain is UPF0102 protein mlr4633, found in Mesorhizobium japonicum (strain LMG 29417 / CECT 9101 / MAFF 303099) (Mesorhizobium loti (strain MAFF 303099)).